The following is a 198-amino-acid chain: Holliday junction branch migration complex subunit RuvA (198 aa).

The interval 1–63 (MYSYIIGVIT…EDASILYGFS (63 aa)) is domain I. Residues 64-142 (SQKERELFNL…KDFVPSEKPV (79 aa)) form a domain II region. The interval 143-153 (NKEVKRSNDSE) is flexible linker. Positions 153–198 (EFAREALLQLGYFKNDVDAFIENTDISGLSIEDIMKKAMKSLDSSR) are domain III.

It belongs to the RuvA family. Homotetramer. Forms an RuvA(8)-RuvB(12)-Holliday junction (HJ) complex. HJ DNA is sandwiched between 2 RuvA tetramers; dsDNA enters through RuvA and exits via RuvB. An RuvB hexamer assembles on each DNA strand where it exits the tetramer. Each RuvB hexamer is contacted by two RuvA subunits (via domain III) on 2 adjacent RuvB subunits; this complex drives branch migration. In the full resolvosome a probable DNA-RuvA(4)-RuvB(12)-RuvC(2) complex forms which resolves the HJ.

It is found in the cytoplasm. In terms of biological role, the RuvA-RuvB-RuvC complex processes Holliday junction (HJ) DNA during genetic recombination and DNA repair, while the RuvA-RuvB complex plays an important role in the rescue of blocked DNA replication forks via replication fork reversal (RFR). RuvA specifically binds to HJ cruciform DNA, conferring on it an open structure. The RuvB hexamer acts as an ATP-dependent pump, pulling dsDNA into and through the RuvAB complex. HJ branch migration allows RuvC to scan DNA until it finds its consensus sequence, where it cleaves and resolves the cruciform DNA. This chain is Holliday junction branch migration complex subunit RuvA, found in Finegoldia magna (strain ATCC 29328 / DSM 20472 / WAL 2508) (Peptostreptococcus magnus).